A 325-amino-acid chain; its full sequence is Glutaminase (325 aa).

7 residues coordinate substrate: S76, N125, E169, N176, Y200, Y252, and V270.

Belongs to the glutaminase family. In terms of assembly, homotetramer.

It catalyses the reaction L-glutamine + H2O = L-glutamate + NH4(+). The protein is Glutaminase of Clavibacter michiganensis subsp. michiganensis (strain NCPPB 382).